Consider the following 434-residue polypeptide: Histidinol dehydrogenase (434 aa).

Zn(2+) is bound by residues glutamate 260 and histidine 263. Residues glutamate 330 and histidine 331 each act as proton acceptor in the active site. Histidine 423 is a binding site for Zn(2+).

The protein belongs to the histidinol dehydrogenase family. Requires Zn(2+) as cofactor.

The enzyme catalyses L-histidinol + 2 NAD(+) + H2O = L-histidine + 2 NADH + 3 H(+). Its pathway is amino-acid biosynthesis; L-histidine biosynthesis; L-histidine from 5-phospho-alpha-D-ribose 1-diphosphate: step 9/9. In terms of biological role, catalyzes the sequential NAD-dependent oxidations of L-histidinol to L-histidinaldehyde and then to L-histidine. The protein is Histidinol dehydrogenase (hisD) of Synechocystis sp. (strain ATCC 27184 / PCC 6803 / Kazusa).